A 185-amino-acid polypeptide reads, in one-letter code: Peroxynitrite isomerase (185 aa).

Residues 1–21 are disordered; the sequence is MHHPARELPFPDALRPGARPA. Residues 34–40 carry the GXWXGXG motif; that stretch reads GTWRGTG. H171 lines the heme b pocket.

The protein belongs to the nitrobindin family. Homodimer. The cofactor is heme b.

It catalyses the reaction peroxynitrite = nitrate. It participates in nitrogen metabolism. Its function is as follows. Heme-binding protein able to scavenge peroxynitrite and to protect free L-tyrosine against peroxynitrite-mediated nitration, by acting as a peroxynitrite isomerase that converts peroxynitrite to nitrate. Therefore, this protein likely plays a role in peroxynitrite sensing and in the detoxification of reactive nitrogen and oxygen species (RNS and ROS, respectively). Is able to bind nitric oxide (NO) in vitro, but may act as a sensor of peroxynitrite levels in vivo. The protein is Peroxynitrite isomerase of Streptomyces griseus subsp. griseus (strain JCM 4626 / CBS 651.72 / NBRC 13350 / KCC S-0626 / ISP 5235).